A 355-amino-acid polypeptide reads, in one-letter code: Holliday junction branch migration complex subunit RuvB (355 aa).

Positions 4 to 195 are large ATPase domain (RuvB-L); the sequence is TDKLTGADRL…FGIVARLEFY (192 aa). ATP contacts are provided by residues L34, R35, G76, K79, T80, T81, 142 to 144, R185, Y195, and R232; that span reads EDY. Residue T80 participates in Mg(2+) binding. Residues 196-266 form a small ATPAse domain (RuvB-S) region; sequence TPDELARIVA…LADAALEMLD (71 aa). Positions 269 to 355 are head domain (RuvB-H); the sequence is SVGFDLMDRK…DGGADLAEGL (87 aa). DNA-binding residues include R305, R324, and R329.

It belongs to the RuvB family. As to quaternary structure, homohexamer. Forms an RuvA(8)-RuvB(12)-Holliday junction (HJ) complex. HJ DNA is sandwiched between 2 RuvA tetramers; dsDNA enters through RuvA and exits via RuvB. An RuvB hexamer assembles on each DNA strand where it exits the tetramer. Each RuvB hexamer is contacted by two RuvA subunits (via domain III) on 2 adjacent RuvB subunits; this complex drives branch migration. In the full resolvosome a probable DNA-RuvA(4)-RuvB(12)-RuvC(2) complex forms which resolves the HJ.

Its subcellular location is the cytoplasm. The enzyme catalyses ATP + H2O = ADP + phosphate + H(+). In terms of biological role, the RuvA-RuvB-RuvC complex processes Holliday junction (HJ) DNA during genetic recombination and DNA repair, while the RuvA-RuvB complex plays an important role in the rescue of blocked DNA replication forks via replication fork reversal (RFR). RuvA specifically binds to HJ cruciform DNA, conferring on it an open structure. The RuvB hexamer acts as an ATP-dependent pump, pulling dsDNA into and through the RuvAB complex. RuvB forms 2 homohexamers on either side of HJ DNA bound by 1 or 2 RuvA tetramers; 4 subunits per hexamer contact DNA at a time. Coordinated motions by a converter formed by DNA-disengaged RuvB subunits stimulates ATP hydrolysis and nucleotide exchange. Immobilization of the converter enables RuvB to convert the ATP-contained energy into a lever motion, pulling 2 nucleotides of DNA out of the RuvA tetramer per ATP hydrolyzed, thus driving DNA branch migration. The RuvB motors rotate together with the DNA substrate, which together with the progressing nucleotide cycle form the mechanistic basis for DNA recombination by continuous HJ branch migration. Branch migration allows RuvC to scan DNA until it finds its consensus sequence, where it cleaves and resolves cruciform DNA. The chain is Holliday junction branch migration complex subunit RuvB from Cupriavidus metallidurans (strain ATCC 43123 / DSM 2839 / NBRC 102507 / CH34) (Ralstonia metallidurans).